Reading from the N-terminus, the 964-residue chain is Translation initiation factor IF-2 (964 aa).

Residues 1–10 (MSDKTNDDKT) show a composition bias toward basic and acidic residues. The disordered stretch occupies residues 1–379 (MSDKTNDDKT…SQMQETREKI (379 aa)). Positions 27-37 (EQSTVRQNFSH) are enriched in polar residues. Low complexity predominate over residues 77-102 (APAASTPAPAQAAQPAQAAPVVRAPA). Pro residues predominate over residues 103–113 (PATPAPKPAAP). A compositionally biased stretch (low complexity) spans 114–140 (AAPVTKPHVAQQRPAQQRPGGQQAQRP). Composition is skewed to basic and acidic residues over residues 156–227 (SEMD…EAAK) and 234–243 (ARTERRDDAR). The segment covering 250–278 (RPQQAGRPQGNRPPQGGRPQQGGPRPAAP) has biased composition (low complexity). Residues 323-338 (PEVRAPKVVKTEDDRR) are compositionally biased toward basic and acidic residues. Residues 462–629 (SRPPVVTIMG…AILLQAEILD (168 aa)) enclose the tr-type G domain. The tract at residues 471–478 (GHVDHGKT) is G1. Residue 471 to 478 (GHVDHGKT) coordinates GTP. Residues 496 to 500 (GITQH) are G2. A G3 region spans residues 517–520 (DTPG). Residues 517–521 (DTPGH) and 571–574 (NKID) contribute to the GTP site. The tract at residues 571-574 (NKID) is G4. Residues 607 to 609 (SAK) form a G5 region.

Belongs to the TRAFAC class translation factor GTPase superfamily. Classic translation factor GTPase family. IF-2 subfamily.

The protein localises to the cytoplasm. Functionally, one of the essential components for the initiation of protein synthesis. Protects formylmethionyl-tRNA from spontaneous hydrolysis and promotes its binding to the 30S ribosomal subunits. Also involved in the hydrolysis of GTP during the formation of the 70S ribosomal complex. In Brucella anthropi (strain ATCC 49188 / DSM 6882 / CCUG 24695 / JCM 21032 / LMG 3331 / NBRC 15819 / NCTC 12168 / Alc 37) (Ochrobactrum anthropi), this protein is Translation initiation factor IF-2.